The following is a 211-amino-acid chain: MAIGLVGRKCGMTHIFTDAGAAVPVTVIHVEPNRVVQVKTLESDGYRAIQVTTGSKKRSRLTKADAGHYSKAGVEAGRGLWEFRLEDSDQDYTVGTELGVGVFAEGQFVDARARSIGKGFAGVVKRHNFRTQDATHGNSLSHRAPGSIGQNQTPGRVFKGKRMAGHMGDKNITVPNLRIVGIDAERSLLLVKGAVPGTKGADVIVRPAAKK.

Residues 134-155 (ATHGNSLSHRAPGSIGQNQTPG) are disordered. Residue Gln-152 is modified to N5-methylglutamine.

This sequence belongs to the universal ribosomal protein uL3 family. As to quaternary structure, part of the 50S ribosomal subunit. Forms a cluster with proteins L14 and L19. Post-translationally, methylated by PrmB.

Functionally, one of the primary rRNA binding proteins, it binds directly near the 3'-end of the 23S rRNA, where it nucleates assembly of the 50S subunit. This is Large ribosomal subunit protein uL3 from Methylococcus capsulatus (strain ATCC 33009 / NCIMB 11132 / Bath).